The primary structure comprises 248 residues: MNVLPCSINTLKGLYEISGVEVGQHFYWQIGGFQVHAQVLITSWVVIAILLGSAAIAVRNPQTIPTDGQNFFEYVLEFIRDVSKTQIGEEEYGPWVPFIGTLFLFIFVSNWSGALLPWRIIQLPHGELAAPTNDINTTVALALPTSVAYFYAGLTKKGLGYFGKYIQPTPILLPINVLEDFTKPLSLSFRLFGNILADELVVVVLVSLVPLVIPIPVMFLGLFTSGIQALIFATLAAAYIGESMEGHH.

The next 5 membrane-spanning stretches (helical) occupy residues 38–58 (QVLI…AIAV), 96–116 (VPFI…GALL), 135–155 (INTT…AGLT), 200–220 (LVVV…VMFL), and 221–241 (GLFT…AYIG).

This sequence belongs to the ATPase A chain family. F-type ATPases have 2 components, CF(1) - the catalytic core - and CF(0) - the membrane proton channel. CF(1) has five subunits: alpha(3), beta(3), gamma(1), delta(1), epsilon(1). CF(0) has four main subunits: a, b, b' and c.

The protein resides in the plastid. It localises to the chloroplast thylakoid membrane. Key component of the proton channel; it plays a direct role in the translocation of protons across the membrane. This Nymphaea alba (White water-lily) protein is ATP synthase subunit a, chloroplastic.